Here is an 85-residue protein sequence, read N- to C-terminus: Senescence-associated and QQS-related protein (85 aa).

Residues 1 to 24 (MSFRKVEKKPTEMGRNMTHEKSDS) show a composition bias toward basic and acidic residues. Disordered regions lie at residues 1 to 35 (MSFRKVEKKPTEMGRNMTHEKSDSDSDNEGAPMTV) and 55 to 85 (SGKARSNYNLTGTAKGTGPINSFSRKHFPNY). Residues 58 to 77 (ARSNYNLTGTAKGTGPINSF) show a composition bias toward polar residues.

Expressed predominantly within leaves and cotyledons vasculatures. Mainly observed in fully expanded leaves, at the base of mature inflorescences, in senescing leaves and cauline leaves, and, to a lower extent, in hypocotyls and rosette leaves prior to flowering.

In terms of biological role, plays a role in carbon allocation, including during senescence and stresses, thus impacting starch accumulation. The sequence is that of Senescence-associated and QQS-related protein from Arabidopsis thaliana (Mouse-ear cress).